Here is a 117-residue protein sequence, read N- to C-terminus: Cell division protein FtsB (117 aa).

Residues 1-6 (MRDWRW) lie on the Cytoplasmic side of the membrane. Residues 7 to 24 (MLLVLALLLGWLQYRFWF) form a helical membrane-spanning segment. Residues 25–117 (GPGNSGEVMM…QVGDHPADVP (93 aa)) are Periplasmic-facing. Residues 29–69 (SGEVMMLEAQVANQERDNEGLQQRNDALAAEVKDLKEGQSA) are a coiled coil.

It belongs to the FtsB family. In terms of assembly, part of a complex composed of FtsB, FtsL and FtsQ.

Its subcellular location is the cell inner membrane. Essential cell division protein. May link together the upstream cell division proteins, which are predominantly cytoplasmic, with the downstream cell division proteins, which are predominantly periplasmic. The sequence is that of Cell division protein FtsB from Stenotrophomonas maltophilia (strain K279a).